A 104-amino-acid chain; its full sequence is Small ribosomal subunit protein uS10 (104 aa).

The protein belongs to the universal ribosomal protein uS10 family. Part of the 30S ribosomal subunit.

In terms of biological role, involved in the binding of tRNA to the ribosomes. This Alkaliphilus metalliredigens (strain QYMF) protein is Small ribosomal subunit protein uS10.